A 376-amino-acid chain; its full sequence is Inactive 2'-5'-oligoadenylate synthase 1B (376 aa).

Residues 1–351 lie on the Cytoplasmic side of the membrane; that stretch reads MEQDLRSIPA…VPTEVGVPMK (351 aa). The chain crosses the membrane as a helical; Anchor for type IV membrane protein span at residues 352–370; it reads YLLCRIFWLLFWSLFHFIF. Over 371-376 the chain is Extracellular; the sequence is GKTSSG.

It belongs to the 2-5A synthase family. Interacts with OSBPL1A and ABCF3. Highly expressed in lung, spleen and thymus. Also detected at lower levels in heart, kidney, liver, lung, skeletal muscle, testes, uterus and ovaries.

It localises to the endoplasmic reticulum membrane. Its function is as follows. Does not have 2'-5'-OAS activity, but can bind double-stranded RNA. The full-length protein displays antiviral activity against flaviviruses such as west Nile virus (WNV) via an alternative antiviral pathway independent of RNase L. The truncated form of the protein lacks antiviral activity. The polypeptide is Inactive 2'-5'-oligoadenylate synthase 1B (Oas1b) (Mus musculus (Mouse)).